The following is a 304-amino-acid chain: UTP--glucose-1-phosphate uridylyltransferase 1 (304 aa).

Belongs to the UDPGP type 2 family.

The catalysed reaction is alpha-D-glucose 1-phosphate + UTP + H(+) = UDP-alpha-D-glucose + diphosphate. It functions in the pathway carbohydrate metabolism; nucleotide-sugar metabolism. In Streptococcus pyogenes serotype M18 (strain MGAS8232), this protein is UTP--glucose-1-phosphate uridylyltransferase 1 (hasC1).